A 424-amino-acid chain; its full sequence is D-inositol 3-phosphate glycosyltransferase (424 aa).

1D-myo-inositol 3-phosphate is bound by residues histidine 9, aspartate 20–asparagine 25, lysine 78, tyrosine 110, threonine 134, and arginine 154. Glycine 23 serves as a coordination point for UDP-N-acetyl-alpha-D-glucosamine. UDP-N-acetyl-alpha-D-glucosamine contacts are provided by arginine 231, lysine 236, and arginine 295. Mg(2+) contacts are provided by tyrosine 304, glutamine 305, and alanine 307. Residues glutamate 317 and glutamate 325 each coordinate UDP-N-acetyl-alpha-D-glucosamine. Position 331 (threonine 331) interacts with Mg(2+).

This sequence belongs to the glycosyltransferase group 1 family. MshA subfamily. In terms of assembly, homodimer.

The catalysed reaction is 1D-myo-inositol 3-phosphate + UDP-N-acetyl-alpha-D-glucosamine = 1D-myo-inositol 2-acetamido-2-deoxy-alpha-D-glucopyranoside 3-phosphate + UDP + H(+). Its function is as follows. Catalyzes the transfer of a N-acetyl-glucosamine moiety to 1D-myo-inositol 3-phosphate to produce 1D-myo-inositol 2-acetamido-2-deoxy-glucopyranoside 3-phosphate in the mycothiol biosynthesis pathway. This Corynebacterium urealyticum (strain ATCC 43042 / DSM 7109) protein is D-inositol 3-phosphate glycosyltransferase.